A 727-amino-acid polypeptide reads, in one-letter code: Pentatricopeptide repeat-containing protein At4g20740 (727 aa).

The interval 1–84 (MKSPKPPNLS…PSPPSHSTVI (84 aa)) is disordered. Positions 38 to 56 (SNRQSIPRVSPQPQSNSLA) are enriched in polar residues. Residues 59–70 (TPFDLRKWDPET) are compositionally biased toward basic and acidic residues. PPR repeat units lie at residues 157–191 (DFAAYNAFAYCLNRNGHFRAADQLPELMDSQGRPP), 192–226 (SEKQFEILIRMHADNRRGLRVYYVYEKMKKFGFKP), 227–261 (RVFLYNRIMDALVKNGYFDLALAVYEDFKEDGLVE), 262–296 (ESTTFMILVKGLCKAGRIEEMLEILQRMRENLCKP), 297–331 (DVFAYTAMIKTLVSEGNLDASLRVWDEMRRDEIKP), 332–366 (DVMAYGTLVVGLCKDGRVERGYELFMEMKGKQILI), 367–401 (DREIYRVLIEGFVADGKVRSACNLWEDLVDSGYIA), 402–436 (DIGIYNAVIKGLCSVNQVDKAYKLFQVAIEEELEP), 437–471 (DFETLSPIMVAYVVMNRLSDFSNVLERIGELGYPV), 506–540 (SVSVYNILMEALYKMGDIQKSLSLFYEMRKLGFEP), 541–575 (DSSSYSIAICCFVEKGDVKAACSFHEKIIEMSCVP), 576–606 (SIAAYLSLTKGLCQIGEIDAVMLLVRECLGN), 612–646 (MEFKYALTVCHVCKGSNAEKVMKVVDEMNQEGVFI), and 647–681 (NEVIYCAIISGMSKHGTIKVAREVFTELKKRKVMT).

The protein belongs to the PPR family. P subfamily.

In Arabidopsis thaliana (Mouse-ear cress), this protein is Pentatricopeptide repeat-containing protein At4g20740.